Consider the following 91-residue polypeptide: Small ribosomal subunit protein uS19 (91 aa).

It belongs to the universal ribosomal protein uS19 family.

Functionally, protein S19 forms a complex with S13 that binds strongly to the 16S ribosomal RNA. This chain is Small ribosomal subunit protein uS19, found in Actinobacillus pleuropneumoniae serotype 7 (strain AP76).